The chain runs to 118 residues: cAMP-responsive element-binding protein-like 2 (118 aa).

A disordered region spans residues 1–25; it reads MDDSKVSGGKVKKPGKRGRKPAKID. Basic residues predominate over residues 10-21; that stretch reads KVKKPGKRGRKP. The 64-residue stretch at 23–86 folds into the bZIP domain; that stretch reads KIDLKAKLER…AAMDQGKIPS (64 aa). The segment at 29-60 is basic motif; it reads KLERSRQSARECRARKKLRYQYLEELVSSRER. The interval 62-69 is leucine-zipper; sequence ICALREEL.

Belongs to the bZIP family. ATF subfamily.

Its subcellular location is the nucleus. In terms of biological role, probable regulator of creb1 transcriptional activity which is involved in adipose cells differentiation. May also play a regulatory role in the cell cycle. This Xenopus tropicalis (Western clawed frog) protein is cAMP-responsive element-binding protein-like 2 (crebl2).